Consider the following 204-residue polypeptide: Probable calcium-binding protein CML46 (204 aa).

EF-hand domains follow at residues 72–106, 132–167, and 170–204; these read LEFQ…LGLS, PSLE…LGLK, and SNLE…NNFC. Ca(2+) is bound by residues Asp-145, Asn-147, Asp-149, and Asp-156.

Its function is as follows. Potential calcium sensor. This chain is Probable calcium-binding protein CML46, found in Arabidopsis thaliana (Mouse-ear cress).